A 425-amino-acid chain; its full sequence is Light-independent protochlorophyllide reductase subunit N (425 aa).

[4Fe-4S] cluster-binding residues include cysteine 17, cysteine 42, and cysteine 103.

The protein belongs to the BchN/ChlN family. Protochlorophyllide reductase is composed of three subunits; ChlL, ChlN and ChlB. Forms a heterotetramer of two ChlB and two ChlN subunits. [4Fe-4S] cluster serves as cofactor.

The catalysed reaction is chlorophyllide a + oxidized 2[4Fe-4S]-[ferredoxin] + 2 ADP + 2 phosphate = protochlorophyllide a + reduced 2[4Fe-4S]-[ferredoxin] + 2 ATP + 2 H2O. It participates in porphyrin-containing compound metabolism; chlorophyll biosynthesis (light-independent). In terms of biological role, component of the dark-operative protochlorophyllide reductase (DPOR) that uses Mg-ATP and reduced ferredoxin to reduce ring D of protochlorophyllide (Pchlide) to form chlorophyllide a (Chlide). This reaction is light-independent. The NB-protein (ChlN-ChlB) is the catalytic component of the complex. This is Light-independent protochlorophyllide reductase subunit N from Synechococcus sp. (strain CC9605).